Consider the following 272-residue polypeptide: Dickkopf-related protein 1 (272 aa).

Residues 1-31 (MMVVCAAAAVRFLAVFTMMALCSLPLLGASA) form the signal peptide. S62 is a glycosylation site (O-linked (GalNAc...) serine). Cystine bridges form between C86–C98, C92–C114, C117–C131, C124–C136, C130–C141, C195–C207, C201–C216, C206–C243, C226–C251, and C245–C269. The segment at 86 to 141 (CAEDEECGSDEYCSSPSRGAAGVGGVQICLACRKRRKRCMRHAMCCPGNYCKNGIC) is DKK-type Cys-1. Residues 195–269 (CLRSSDCAAG…ASNSSRLHTC (75 aa)) form a DKK-type Cys-2 region. A glycan (N-linked (GlcNAc...) asparagine) is linked at N262.

Belongs to the dickkopf family. Interacts (via the C-terminal Cys-rich domain) with LRP5 (via beta-propeller regions 3 and 4); the interaction, enhanced by MESD and or KREMEN, antagonizes Wnt-mediated signaling. Interacts with LRP6. Forms a ternary complex with LRP6 and KREM1. Interacts with KREM1.

The protein resides in the secreted. In terms of biological role, antagonizes canonical Wnt signaling by inhibiting LRP5/6 interaction with Wnt and by forming a ternary complex with the transmembrane protein KREMEN that promotes internalization of LRP5/6. Inhibits the pro-apoptotic function of KREMEN1 in a Wnt-independent manner, and has anti-apoptotic activity. Plays a role in limb development; attenuates Wnt signaling in the developing limb to allow normal limb patterning. The protein is Dickkopf-related protein 1 (Dkk1) of Mus musculus (Mouse).